Consider the following 176-residue polypeptide: Inner membrane-spanning protein YciB (176 aa).

A run of 5 helical transmembrane segments spans residues 3 to 23 (FLFD…WGIF), 49 to 69 (TMLW…LVLH), 72 to 92 (KFIQ…LVAA), 118 to 138 (KLNL…LYVV), and 149 to 169 (FKLF…SLWL).

Belongs to the YciB family.

The protein localises to the cell inner membrane. Its function is as follows. Plays a role in cell envelope biogenesis, maintenance of cell envelope integrity and membrane homeostasis. This Burkholderia thailandensis (strain ATCC 700388 / DSM 13276 / CCUG 48851 / CIP 106301 / E264) protein is Inner membrane-spanning protein YciB.